Reading from the N-terminus, the 887-residue chain is PAN2-PAN3 deadenylation complex subunit Pan3 (887 aa).

Residues 49–77 (GVKLKYCRYYAKDKTCFYGEECQFLHEDP) form a C3H1-type zinc finger. Disordered regions lie at residues 111 to 139 (GGGA…GLDG), 280 to 307 (ENNL…SNVS), and 321 to 393 (PSMG…GQVI). The tract at residues 147 to 498 (MDGGALTDAS…PPPNRIQKSS (352 aa)) is necessary and sufficient for interaction with PABPC1 but not needed for interaction with PAN2. Composition is skewed to polar residues over residues 281-290 (NNLQTPNPTA) and 298-307 (GSTSRLSNVS). A PABPC-interacting motif-2 (PAM-2) motif is present at residues 284-299 (QTPNPTASEFIPKGGS). Residues Ser-354 and Ser-361 each carry the phosphoserine modification. Residues 463-750 (QIDQADMPAV…SVNDIMPMIG (288 aa)) form a pseudokinase domain region. Residues Arg-521, 570–577 (DFHAGGET), and 644–645 (TK) contribute to the ATP site. Residues 789 to 887 (TINERPEFQK…ELIAAANGQL (99 aa)) are knob domain.

Belongs to the protein kinase superfamily. PAN3 family. In terms of assembly, homodimer. Forms a heterotrimer with a catalytic subunit PAN2 to form the poly(A)-nuclease (PAN) deadenylation complex. Interacts (via PAM-2 motif) with poly(A)-binding protein PABPC1 (via PABC domain), conferring substrate specificity of the enzyme complex. Interacts with the GW182 family proteins TNRC6A, TNRC6B and TNRC6C. Interacts with YTHDF3. As to quaternary structure, interacts with PAN2. Interacts (via N-terminus) with PABPC1 at lower efficiency than isoform 3. Interacts with PAN2. Interacts (via N-terminus) with PABPC1 at higher efficiency than isoform 1.

It is found in the cytoplasm. The protein localises to the P-body. The protein resides in the nucleus. Regulatory subunit of the poly(A)-nuclease (PAN) deadenylation complex, one of two cytoplasmic mRNA deadenylases involved in general and miRNA-mediated mRNA turnover. PAN specifically shortens poly(A) tails of RNA and the activity is stimulated by poly(A)-binding protein (PABP). PAN deadenylation is followed by rapid degradation of the shortened mRNA tails by the CCR4-NOT complex. Deadenylated mRNAs are then degraded by two alternative mechanisms, namely exosome-mediated 3'-5' exonucleolytic degradation, or deadenylation-dependent mRNA decapping and subsequent 5'-3' exonucleolytic degradation by XRN1. PAN3 acts as a regulator for PAN activity, recruiting the catalytic subunit PAN2 to mRNA via its interaction with RNA and PABP, and to miRNA targets via its interaction with GW182 family proteins. In terms of biological role, decreases PAN2-mediated deadenylation, possibly by preventing progression into the second CCR4-NOT mediated stage of biphasic deadenylation. Has a significant effect on mRNA stability, generally stabilizing a subset of the transcriptome. Stabilizes mRNAs degraded by the AU-rich element (ARE)-mediated mRNA decay pathway but promotes degradation of mRNAs by the microRNA-mediated pathway. Its activity influences mRNP remodeling, specifically reducing formation of a subset of P-bodies containing GW220, an isoform of TNRC6A. Functionally, enhances PAN2 deadenylase activity and has an extensive effect on mRNA stability, generally enhancing mRNA decay across the transcriptome by multiple pathways, including the AU-rich element (ARE)-mediated pathway, microRNA-mediated pathway and the nonsense-mediated pathway (NMD). Its activity is required for efficient P-body formation. May be involved in regulating mRNAs of genes involved in cell cycle progression and cell proliferation. The protein is PAN2-PAN3 deadenylation complex subunit Pan3 of Mus musculus (Mouse).